We begin with the raw amino-acid sequence, 406 residues long: CinA-like protein (406 aa).

This sequence belongs to the CinA family.

The sequence is that of CinA-like protein from Deinococcus geothermalis (strain DSM 11300 / CIP 105573 / AG-3a).